The sequence spans 155 residues: Small ribosomal subunit protein uS7cz/uS7cy (155 aa).

The protein belongs to the universal ribosomal protein uS7 family. Part of the 30S ribosomal subunit.

Its subcellular location is the plastid. Functionally, one of the primary rRNA binding proteins, it binds directly to 16S rRNA where it nucleates assembly of the head domain of the 30S subunit. The polypeptide is Small ribosomal subunit protein uS7cz/uS7cy (rps7-A) (Cuscuta obtusiflora (Peruvian dodder)).